Consider the following 664-residue polypeptide: Macoilin (664 aa).

The next 4 helical transmembrane spans lie at 28-48 (TFLY…DFVL), 75-95 (AFSV…LLFI), 120-140 (VCLP…AIRF), and 154-174 (FAAH…KSYV). Over residues 253–265 (REKGKEKDKDAKK) the composition is skewed to basic and acidic residues. The segment at 253-274 (REKGKEKDKDAKKHNLGINNNN) is disordered. Ser305 carries the post-translational modification Phosphoserine. A compositionally biased stretch (polar residues) spans 320 to 348 (KNYKNASGVVNSSPRSHSATNGSIPSSSS). The segment at 320–375 (KNYKNASGVVNSSPRSHSATNGSIPSSSSKNEKKQKCTSKSPSTHKDLMENCIPNN) is disordered. Asn324 carries an N-linked (GlcNAc...) asparagine glycan. Ser332 bears the Phosphoserine mark. N-linked (GlcNAc...) asparagine glycans are attached at residues Asn340 and Asn452. Residues 630-664 (TSPLSPVSPHYSSKFVETSPSGLDPNASVYQPLKK) are disordered. 2 positions are modified to phosphoserine: Ser631 and Ser634. A glycan (N-linked (GlcNAc...) asparagine) is linked at Asn655.

Belongs to the macoilin family.

The protein localises to the rough endoplasmic reticulum membrane. Its subcellular location is the nucleus membrane. In terms of biological role, plays a role in the regulation of neuronal activity. The polypeptide is Macoilin (MACO1) (Macaca mulatta (Rhesus macaque)).